The sequence spans 55 residues: Large ribosomal subunit protein bL33 (55 aa).

This sequence belongs to the bacterial ribosomal protein bL33 family.

The polypeptide is Large ribosomal subunit protein bL33 (Paenarthrobacter aurescens (strain TC1)).